The primary structure comprises 174 residues: Cytoglobin-1 (174 aa).

One can recognise a Globin domain in the interval 15-165 (SLTEEDVCVI…LYWQMNRVYA (151 aa)). Positions 78 and 110 each coordinate heme b.

The protein belongs to the globin family. As to quaternary structure, monomeric. In terms of tissue distribution, expressed in all tissues examined with highest levels in brain, eye, gut and heart.

It localises to the cytoplasm. The protein resides in the nucleus. It catalyses the reaction Fe(II)-heme b-[protein] + nitric oxide + O2 = Fe(III)-heme b-[protein] + nitrate. The catalysed reaction is Fe(III)-heme b-[protein] + nitric oxide + H2O = Fe(II)-heme b-[protein] + nitrite + 2 H(+). The enzyme catalyses 2 superoxide + 2 H(+) = H2O2 + O2. It carries out the reaction H2O2 + AH2 = A + 2 H2O. In terms of biological role, probable multifunctional globin with a hexacoordinated heme iron required for the catalysis of various reactions depending on redox condition of the cell as well as oxygen availability. Has a nitric oxide dioxygenase (NOD) activity and is most probably involved in cell-mediated and oxygen-dependent nitric oxide consumption. Under normoxic conditions functions as a nitric oxide dioxygenase (NOD) but under hypoxic conditions the globin may switch its function to that of a nitrite (NO2) reductase (NiR), generating nitric oxide. Could also have peroxidase and superoxide dismutase activities, detoxifying reactive oxygen species and protecting cells against oxidative stress. Also binds dioxygen with low affinity and could function as an oxygen sensor but has probably no function as a respiratory oxygen carrier. The polypeptide is Cytoglobin-1 (cygb1) (Danio rerio (Zebrafish)).